A 506-amino-acid chain; its full sequence is Deoxyguanosinetriphosphate triphosphohydrolase (506 aa).

One can recognise an HD domain in the interval 66 to 274; it reads RLTHSLEVQQ…MEAADDISYC (209 aa).

The protein belongs to the dGTPase family. Type 1 subfamily. In terms of assembly, homotetramer. The cofactor is Mg(2+).

The catalysed reaction is dGTP + H2O = 2'-deoxyguanosine + triphosphate + H(+). DGTPase preferentially hydrolyzes dGTP over the other canonical NTPs. This chain is Deoxyguanosinetriphosphate triphosphohydrolase, found in Yersinia pseudotuberculosis serotype O:3 (strain YPIII).